The sequence spans 295 residues: Diaminopimelate epimerase (295 aa).

Residues N13, Q46, and N66 each coordinate substrate. C75 (proton donor) is an active-site residue. Substrate-binding positions include 76 to 77, N162, N195, and 213 to 214; these read GN and ER. C222 (proton acceptor) is an active-site residue. Residue 223–224 participates in substrate binding; the sequence is GT.

The protein belongs to the diaminopimelate epimerase family. As to quaternary structure, homodimer.

It is found in the cytoplasm. It carries out the reaction (2S,6S)-2,6-diaminopimelate = meso-2,6-diaminopimelate. It functions in the pathway amino-acid biosynthesis; L-lysine biosynthesis via DAP pathway; DL-2,6-diaminopimelate from LL-2,6-diaminopimelate: step 1/1. Catalyzes the stereoinversion of LL-2,6-diaminopimelate (L,L-DAP) to meso-diaminopimelate (meso-DAP), a precursor of L-lysine and an essential component of the bacterial peptidoglycan. The sequence is that of Diaminopimelate epimerase from Psychrobacter cryohalolentis (strain ATCC BAA-1226 / DSM 17306 / VKM B-2378 / K5).